We begin with the raw amino-acid sequence, 313 residues long: Bifunctional pinoresinol-lariciresinol reductase 1 (313 aa).

NADP(+) contacts are provided by residues 11–17 (GGTGYIG), Arg36, and Lys45. Lys138 (proton acceptor) is an active-site residue. NADP(+) is bound at residue Arg142. A substrate-binding site is contributed by His271.

Belongs to the NmrA-type oxidoreductase family. Isoflavone reductase subfamily. As to quaternary structure, dimer.

It catalyses the reaction (+)-lariciresinol + NADP(+) = (+)-pinoresinol + NADPH + H(+). The enzyme catalyses (-)-lariciresinol + NADP(+) = (-)-pinoresinol + NADPH + H(+). The catalysed reaction is (+)-secoisolariciresinol + NADP(+) = (-)-lariciresinol + NADPH + H(+). Functionally, reductase involved in lignan biosynthesis. Catalyzes the enantioselective sequential conversion of (-)-pinoresinol into (-)-lariciresinol and of (-)-lariciresinol into (+)-secoisolariciresinol. Can also convert with a lower efficiency (+)-pinoresinol into (+)-lariciresinol, but not (+)-lariciresinol into (-)-secoisolariciresinol. Abstracts the 4R-hydride from the NADPH cofactor during catalysis. This is Bifunctional pinoresinol-lariciresinol reductase 1 (PLR_Tp1) from Thuja plicata (Western red-cedar).